Here is a 532-residue protein sequence, read N- to C-terminus: Invertase 2 (532 aa).

The signal sequence occupies residues 1 to 19 (MLLQAFLFLLAGFAAKISA). An N-linked (GlcNAc...) asparagine glycan is attached at Asn-23. Substrate-binding positions include 39–42 (WMND) and Gln-60. Asp-42 is a catalytic residue. Asn-64 carries N-linked (GlcNAc...) asparagine; partial glycosylation. N-linked (GlcNAc...) asparagine glycosylation is present at Asn-97. Position 102–103 (102–103 (FS)) interacts with substrate. N-linked (GlcNAc...) asparagine glycans are attached at residues Asn-111 and Asn-118. Asn-165 carries N-linked (GlcNAc...) asparagine; partial glycosylation. Substrate-binding positions include 170-171 (RD) and Glu-223. N-linked (GlcNAc...) asparagine; partial glycans are attached at residues Asn-266 and Asn-275. Residue Trp-311 coordinates substrate. Residues Asn-356, Asn-369, Asn-384, and Asn-398 are each glycosylated (N-linked (GlcNAc...) asparagine). Residue Asn-512 is glycosylated (N-linked (GlcNAc...) asparagine; partial).

The protein belongs to the glycosyl hydrolase 32 family. Post-translationally, isoform Secreted is glycosylated. Isoform Intracellular is not glycosylated.

Its subcellular location is the cytoplasm. It is found in the secreted. It carries out the reaction Hydrolysis of terminal non-reducing beta-D-fructofuranoside residues in beta-D-fructofuranosides.. The sequence is that of Invertase 2 (SUC2) from Saccharomyces cerevisiae (strain ATCC 204508 / S288c) (Baker's yeast).